We begin with the raw amino-acid sequence, 141 residues long: ATP synthase epsilon chain (141 aa).

This sequence belongs to the ATPase epsilon chain family. F-type ATPases have 2 components, CF(1) - the catalytic core - and CF(0) - the membrane proton channel. CF(1) has five subunits: alpha(3), beta(3), gamma(1), delta(1), epsilon(1). CF(0) has three main subunits: a, b and c.

It is found in the cell inner membrane. Its function is as follows. Produces ATP from ADP in the presence of a proton gradient across the membrane. The sequence is that of ATP synthase epsilon chain from Bordetella avium (strain 197N).